We begin with the raw amino-acid sequence, 488 residues long: Glutamyl-tRNA(Gln) amidotransferase subunit A (488 aa).

Residues Lys77 and Ser152 each act as charge relay system in the active site. Ser176 serves as the catalytic Acyl-ester intermediate.

The protein belongs to the amidase family. GatA subfamily. Heterotrimer of A, B and C subunits.

The catalysed reaction is L-glutamyl-tRNA(Gln) + L-glutamine + ATP + H2O = L-glutaminyl-tRNA(Gln) + L-glutamate + ADP + phosphate + H(+). Its function is as follows. Allows the formation of correctly charged Gln-tRNA(Gln) through the transamidation of misacylated Glu-tRNA(Gln) in organisms which lack glutaminyl-tRNA synthetase. The reaction takes place in the presence of glutamine and ATP through an activated gamma-phospho-Glu-tRNA(Gln). The chain is Glutamyl-tRNA(Gln) amidotransferase subunit A from Streptococcus pyogenes serotype M1.